Consider the following 347-residue polypeptide: Holliday junction branch migration complex subunit RuvB (347 aa).

The large ATPase domain (RuvB-L) stretch occupies residues 1 to 183 (MSDERVVTPR…FGSVHRLEFY (183 aa)). ATP is bound by residues L22, R23, G64, K67, T68, S69, 130–132 (EDF), R173, Y183, and R220. Residue T68 participates in Mg(2+) binding. The small ATPAse domain (RuvB-S) stretch occupies residues 184–254 (SVDALYEIVM…VARDALAKLE (71 aa)). Residues 257 to 347 (HLGLDENDRR…NGAEQGRLWT (91 aa)) are head domain (RuvB-H). DNA-binding residues include R312 and R317.

It belongs to the RuvB family. As to quaternary structure, homohexamer. Forms an RuvA(8)-RuvB(12)-Holliday junction (HJ) complex. HJ DNA is sandwiched between 2 RuvA tetramers; dsDNA enters through RuvA and exits via RuvB. An RuvB hexamer assembles on each DNA strand where it exits the tetramer. Each RuvB hexamer is contacted by two RuvA subunits (via domain III) on 2 adjacent RuvB subunits; this complex drives branch migration. In the full resolvosome a probable DNA-RuvA(4)-RuvB(12)-RuvC(2) complex forms which resolves the HJ.

Its subcellular location is the cytoplasm. The catalysed reaction is ATP + H2O = ADP + phosphate + H(+). Its function is as follows. The RuvA-RuvB-RuvC complex processes Holliday junction (HJ) DNA during genetic recombination and DNA repair, while the RuvA-RuvB complex plays an important role in the rescue of blocked DNA replication forks via replication fork reversal (RFR). RuvA specifically binds to HJ cruciform DNA, conferring on it an open structure. The RuvB hexamer acts as an ATP-dependent pump, pulling dsDNA into and through the RuvAB complex. RuvB forms 2 homohexamers on either side of HJ DNA bound by 1 or 2 RuvA tetramers; 4 subunits per hexamer contact DNA at a time. Coordinated motions by a converter formed by DNA-disengaged RuvB subunits stimulates ATP hydrolysis and nucleotide exchange. Immobilization of the converter enables RuvB to convert the ATP-contained energy into a lever motion, pulling 2 nucleotides of DNA out of the RuvA tetramer per ATP hydrolyzed, thus driving DNA branch migration. The RuvB motors rotate together with the DNA substrate, which together with the progressing nucleotide cycle form the mechanistic basis for DNA recombination by continuous HJ branch migration. Branch migration allows RuvC to scan DNA until it finds its consensus sequence, where it cleaves and resolves cruciform DNA. The chain is Holliday junction branch migration complex subunit RuvB from Roseiflexus castenholzii (strain DSM 13941 / HLO8).